The following is a 254-amino-acid chain: Alcohol dehydrogenase (254 aa).

10 to 33 (FVAGLGGIGLDTSREIVKSGPKNL) is an NAD(+) binding site. Serine 138 contacts substrate. Catalysis depends on tyrosine 151, which acts as the Proton acceptor.

It belongs to the short-chain dehydrogenases/reductases (SDR) family. In terms of assembly, homodimer.

It catalyses the reaction a primary alcohol + NAD(+) = an aldehyde + NADH + H(+). The enzyme catalyses a secondary alcohol + NAD(+) = a ketone + NADH + H(+). The polypeptide is Alcohol dehydrogenase (Adh) (Drosophila mimica (Fruit fly)).